The primary structure comprises 279 residues: MREPQRSRIGVFDSGVGGLTVLRELYRQLPKESILYFGDTARLPYGKRSPQVILQYVREILTWMAAEEVKMVIMACNTSSALALETVQQEFNMPILGVILPGARAAVRQGRRIGVISTPATAASNAYRHAIHEITPDALVWQMACPEFVPLIEQNRLHDPYTLEVAKGYLQPLLDADIDTLVFGCTHYRHLTPVFQQILPSHIRLVDPASHVVKAARQELEVMGLRNSEMSIATRFTVSGCPQQFAELSHQWLGFTPMVEKISLPCLSSICPQPLEIRE.

Substrate contacts are provided by residues Asp13–Ser14 and Tyr45–Gly46. Cys76 serves as the catalytic Proton donor/acceptor. Residue Asn77–Thr78 coordinates substrate. Residue Cys185 is the Proton donor/acceptor of the active site. Thr186 to His187 serves as a coordination point for substrate.

Belongs to the aspartate/glutamate racemases family.

It catalyses the reaction L-glutamate = D-glutamate. The protein operates within cell wall biogenesis; peptidoglycan biosynthesis. Provides the (R)-glutamate required for cell wall biosynthesis. This is Glutamate racemase from Synechocystis sp. (strain ATCC 27184 / PCC 6803 / Kazusa).